The sequence spans 423 residues: Replication factor C large subunit (423 aa).

50 to 57 (GPAGCGKT) contacts ATP.

This sequence belongs to the activator 1 small subunits family. RfcL subfamily. Heteromultimer composed of small subunits (RfcS) and large subunits (RfcL).

Functionally, part of the RFC clamp loader complex which loads the PCNA sliding clamp onto DNA. In Staphylothermus marinus (strain ATCC 43588 / DSM 3639 / JCM 9404 / F1), this protein is Replication factor C large subunit.